Reading from the N-terminus, the 542-residue chain is Chaperonin GroEL 3 (542 aa).

ATP contacts are provided by residues 30–33 (TLGP), K51, 87–91 (DGTTT), G415, and D496.

The protein belongs to the chaperonin (HSP60) family. As to quaternary structure, forms a cylinder of 14 subunits composed of two heptameric rings stacked back-to-back. Interacts with the co-chaperonin GroES.

It localises to the cytoplasm. The enzyme catalyses ATP + H2O + a folded polypeptide = ADP + phosphate + an unfolded polypeptide.. Its function is as follows. Together with its co-chaperonin GroES, plays an essential role in assisting protein folding. The GroEL-GroES system forms a nano-cage that allows encapsulation of the non-native substrate proteins and provides a physical environment optimized to promote and accelerate protein folding. The chain is Chaperonin GroEL 3 from Rhizobium johnstonii (strain DSM 114642 / LMG 32736 / 3841) (Rhizobium leguminosarum bv. viciae).